A 206-amino-acid polypeptide reads, in one-letter code: FMN-dependent NADH:quinone oxidoreductase 1 (206 aa).

Residues Ser-10 and 16–18 (SLS) each bind FMN.

This sequence belongs to the azoreductase type 1 family. As to quaternary structure, homodimer. FMN is required as a cofactor.

It catalyses the reaction 2 a quinone + NADH + H(+) = 2 a 1,4-benzosemiquinone + NAD(+). The enzyme catalyses N,N-dimethyl-1,4-phenylenediamine + anthranilate + 2 NAD(+) = 2-(4-dimethylaminophenyl)diazenylbenzoate + 2 NADH + 2 H(+). Functionally, quinone reductase that provides resistance to thiol-specific stress caused by electrophilic quinones. Also exhibits azoreductase activity. Catalyzes the reductive cleavage of the azo bond in aromatic azo compounds to the corresponding amines. The polypeptide is FMN-dependent NADH:quinone oxidoreductase 1 (Burkholderia lata (strain ATCC 17760 / DSM 23089 / LMG 22485 / NCIMB 9086 / R18194 / 383)).